The primary structure comprises 210 residues: Nta operon transcriptional regulator (210 aa).

An HTH gntR-type domain is found at 1–55 (MAVSYHFRPGERINEVELAAQLKVSRTPLREALNRLTTEGFLTTTANKGFFARVL). The H-T-H motif DNA-binding region spans 15–34 (EVELAAQLKVSRTPLREALN).

Probable regulator for the expression of the NTA monooxygenase subunits. The sequence is that of Nta operon transcriptional regulator (ntaR) from Aminobacter aminovorans (Chelatobacter heintzii).